The following is a 131-amino-acid chain: Mesogenin-1 (131 aa).

A disordered region spans residues 22-79 (EDRSFGDSASSPESESFDSACSSPDARSSPTAGCEHAEQQKPKVKMSMRRRMKASERE). Low complexity predominate over residues 27–45 (GDSASSPESESFDSACSSP). Residues 63–73 (PKVKMSMRRRM) show a composition bias toward basic residues. One can recognise a bHLH domain in the interval 70–124 (RRRMKASEREKLRMRSLAEALHQLRDYLPPGYSRRGQPLTKIQTLKYTIQYIKEL).

Coexpression of ntl and spt is required for expression.

It localises to the nucleus. Its function is as follows. Involved in specifying the paraxial, but not dorsal, mesoderm. May regulate the expression of T-box transcription factors required for mesoderm formation and differentiation. The protein is Mesogenin-1 (msgn1) of Danio rerio (Zebrafish).